Consider the following 334-residue polypeptide: 6-phosphogluconolactonase (334 aa).

This sequence belongs to the cycloisomerase 2 family.

It catalyses the reaction 6-phospho-D-glucono-1,5-lactone + H2O = 6-phospho-D-gluconate + H(+). It participates in carbohydrate degradation; pentose phosphate pathway; D-ribulose 5-phosphate from D-glucose 6-phosphate (oxidative stage): step 2/3. In terms of biological role, catalyzes the hydrolysis of 6-phosphogluconolactone to 6-phosphogluconate. The chain is 6-phosphogluconolactonase from Buchnera aphidicola subsp. Acyrthosiphon pisum (strain Tuc7).